Here is a 651-residue protein sequence, read N- to C-terminus: Peptide-N(4)-(N-acetyl-beta-glucosaminyl)asparagine amidase (651 aa).

A2 is modified (N-acetylalanine). Positions 30–91 (EASKLLLTYA…EGETHLIFPK (62 aa)) constitute a PUB domain. Positions 116-153 (SSQKVEFSQHPAAVRLPAEQPEDPTGLMQHSGNQPGQP) are disordered. The segment covering 143–152 (MQHSGNQPGQ) has biased composition (polar residues). Zn(2+)-binding residues include C247, C250, C280, and C283. C306 serves as the catalytic Nucleophile. Active-site residues include H333 and D350. Positions 451 to 651 (ELGGRVSGSL…LEIIITFSDL (201 aa)) constitute a PAW domain.

Belongs to the transglutaminase-like superfamily. PNGase family. In terms of assembly, component of a complex required to couple retrotranslocation, ubiquitination and deglycosylation composed of NGLY1, SAKS1, AMFR, VCP and RAD23B. Interacts with the proteasome components RAD23B and PSMC1. Interacts with directly with VCP. Interacts with DERL1, bringing it close to the endoplasmic reticulum membrane. Interacts with SAKS1. Zn(2+) serves as cofactor.

The protein localises to the cytoplasm. The catalysed reaction is Hydrolysis of an N(4)-(acetyl-beta-D-glucosaminyl)asparagine residue in which the glucosamine residue may be further glycosylated, to yield a (substituted) N-acetyl-beta-D-glucosaminylamine and a peptide containing an aspartate residue.. Inhibited by Z-VAD-fmk, a well-known caspase inhibitor, which inhibits enzyme activity through covalent binding of the carbohydrate to the single Cys-306 residue. Its function is as follows. Specifically deglycosylates the denatured form of N-linked glycoproteins in the cytoplasm and assists their proteasome-mediated degradation. Cleaves the beta-aspartyl-glucosamine (GlcNAc) of the glycan and the amide side chain of Asn, converting Asn to Asp. Prefers proteins containing high-mannose over those bearing complex type oligosaccharides. Can recognize misfolded proteins in the endoplasmic reticulum that are exported to the cytosol to be destroyed and deglycosylate them, while it has no activity toward native proteins. Deglycosylation is a prerequisite for subsequent proteasome-mediated degradation of some, but not all, misfolded glycoproteins. This chain is Peptide-N(4)-(N-acetyl-beta-glucosaminyl)asparagine amidase (Ngly1), found in Rattus norvegicus (Rat).